Reading from the N-terminus, the 374-residue chain is Protein STRICTOSIDINE SYNTHASE-LIKE 10 (374 aa).

A signal peptide spans 1 to 18; the sequence is MTMMIITVFLTVIAAVLA. An N-linked (GlcNAc...) asparagine glycan is attached at asparagine 50.

Belongs to the strictosidine synthase family.

The protein localises to the vacuole. This is Protein STRICTOSIDINE SYNTHASE-LIKE 10 from Arabidopsis thaliana (Mouse-ear cress).